Here is a 200-residue protein sequence, read N- to C-terminus: GTP cyclohydrolase-2 (200 aa).

50–54 (RVHSE) provides a ligand contact to GTP. Zn(2+)-binding residues include C55, C66, and C68. Residues Q71, 93–95 (EGR), and T115 each bind GTP. Catalysis depends on D127, which acts as the Proton acceptor. The Nucleophile role is filled by R129. Residues T150 and K155 each contribute to the GTP site.

It belongs to the GTP cyclohydrolase II family. It depends on Zn(2+) as a cofactor.

The enzyme catalyses GTP + 4 H2O = 2,5-diamino-6-hydroxy-4-(5-phosphoribosylamino)-pyrimidine + formate + 2 phosphate + 3 H(+). The protein operates within cofactor biosynthesis; riboflavin biosynthesis; 5-amino-6-(D-ribitylamino)uracil from GTP: step 1/4. Its function is as follows. Catalyzes the conversion of GTP to 2,5-diamino-6-ribosylamino-4(3H)-pyrimidinone 5'-phosphate (DARP), formate and pyrophosphate. The protein is GTP cyclohydrolase-2 of Acinetobacter baumannii (strain AB0057).